A 430-amino-acid chain; its full sequence is Glutamate-1-semialdehyde 2,1-aminomutase (430 aa).

K267 is modified (N6-(pyridoxal phosphate)lysine).

It belongs to the class-III pyridoxal-phosphate-dependent aminotransferase family. HemL subfamily. As to quaternary structure, homodimer. The cofactor is pyridoxal 5'-phosphate.

The protein resides in the cytoplasm. The catalysed reaction is (S)-4-amino-5-oxopentanoate = 5-aminolevulinate. The protein operates within porphyrin-containing compound metabolism; protoporphyrin-IX biosynthesis; 5-aminolevulinate from L-glutamyl-tRNA(Glu): step 2/2. The sequence is that of Glutamate-1-semialdehyde 2,1-aminomutase from Cytophaga hutchinsonii (strain ATCC 33406 / DSM 1761 / CIP 103989 / NBRC 15051 / NCIMB 9469 / D465).